We begin with the raw amino-acid sequence, 363 residues long: NADH-quinone oxidoreductase subunit H (363 aa).

The next 10 helical transmembrane spans lie at 29–49 (VLKI…YVVW), 62–82 (GPMY…KLLF), 96–116 (FIIA…VVPF), 127–147 (VGLL…ILAG), 163–183 (AAQV…VMIA), 202–222 (FFDW…VSGV), 238–257 (EIVA…LFFL), 278–298 (WLSP…DWLW), 299–319 (KGGW…YIWF), and 339–359 (FIPL…YGVI).

The protein belongs to the complex I subunit 1 family. In terms of assembly, NDH-1 is composed of 14 different subunits. Subunits NuoA, H, J, K, L, M, N constitute the membrane sector of the complex.

The protein resides in the cell inner membrane. The catalysed reaction is a quinone + NADH + 5 H(+)(in) = a quinol + NAD(+) + 4 H(+)(out). Functionally, NDH-1 shuttles electrons from NADH, via FMN and iron-sulfur (Fe-S) centers, to quinones in the respiratory chain. The immediate electron acceptor for the enzyme in this species is believed to be ubiquinone. Couples the redox reaction to proton translocation (for every two electrons transferred, four hydrogen ions are translocated across the cytoplasmic membrane), and thus conserves the redox energy in a proton gradient. This subunit may bind ubiquinone. The protein is NADH-quinone oxidoreductase subunit H of Xanthomonas oryzae pv. oryzae (strain MAFF 311018).